Reading from the N-terminus, the 224-residue chain is Response regulator protein GraR (224 aa).

The 114-residue stretch at 2–115 (QILLVEDDNT…VLIAKLQAIY (114 aa)) folds into the Response regulatory domain. D51 is modified (4-aspartylphosphate). A DNA-binding region (ompR/PhoB-type) is located at residues 126 to 224 (KRTLTWQDAV…KVGKGYMAHE (99 aa)). T128, T130, and T149 each carry phosphothreonine.

In terms of assembly, interacts with GraX. Phosphorylated by GraS. Phosphorylated by Stk1; phosphorylation increases the DNA-binding activity of GraR.

The protein localises to the cytoplasm. Member of the two-component regulatory system GraR/GraS involved in resistance against cationic antimicrobial peptides (CAMPs). Upon phosphorylation by GraS, functions as a transcription regulator by direct binding to promoter regions of target genes such as adhesins, exoproteins, transporters, toxins, and proteins involved in cell wall synthesis. Down-regulates the expression of many genes involved in RNA and amino acid synthesis or glycolysis. This Staphylococcus aureus (strain Mu50 / ATCC 700699) protein is Response regulator protein GraR (graR).